Here is a 106-residue protein sequence, read N- to C-terminus: UPF0145 protein APJL_0492 (106 aa).

The protein belongs to the UPF0145 family.

This Actinobacillus pleuropneumoniae serotype 3 (strain JL03) protein is UPF0145 protein APJL_0492.